The chain runs to 131 residues: Large ribosomal subunit protein eL32 (131 aa).

The protein belongs to the eukaryotic ribosomal protein eL32 family.

This chain is Large ribosomal subunit protein eL32 (rpl32e), found in Sulfurisphaera tokodaii (strain DSM 16993 / JCM 10545 / NBRC 100140 / 7) (Sulfolobus tokodaii).